A 652-amino-acid chain; its full sequence is Tetracycline resistance protein TetP (652 aa).

One can recognise a tr-type G domain in the interval 2-252 (KKIINIGIVA…CSYFPFASND (251 aa)). GTP-binding positions include 11–18 (AHVDAGKT), 75–79 (DTPGH), and 129–132 (NKLD).

This sequence belongs to the TRAFAC class translation factor GTPase superfamily. Classic translation factor GTPase family. TetM/TetO subfamily.

In terms of biological role, abolishes the inhibitory effect of tetracyclin on protein synthesis by a non-covalent modification of the ribosomes. This chain is Tetracycline resistance protein TetP (tetP), found in Clostridium perfringens.